A 139-amino-acid chain; its full sequence is Large ribosomal subunit protein uL16 (139 aa).

Basic residues predominate over residues 1 to 19 (MLIPRKVKHRKQHHPKRSG). Positions 1 to 22 (MLIPRKVKHRKQHHPKRSGVAK) are disordered.

It belongs to the universal ribosomal protein uL16 family. As to quaternary structure, part of the 50S ribosomal subunit.

In terms of biological role, binds 23S rRNA and is also seen to make contacts with the A and possibly P site tRNAs. The polypeptide is Large ribosomal subunit protein uL16 (Acidothermus cellulolyticus (strain ATCC 43068 / DSM 8971 / 11B)).